Consider the following 758-residue polypeptide: Amyloid beta precursor protein binding family B member 2 (758 aa).

S123 is modified (phosphoserine). Positions 134–154 (KLEGKEPHPQDSSSCEILPSQ) are disordered. At S160 the chain carries Phosphoserine. Residues 176 to 190 (EQNRGNHHGTAEEKS) show a composition bias toward basic and acidic residues. Disordered stretches follow at residues 176–195 (EQNR…PVQG), 206–295 (LLLQ…LPPG), and 326–351 (DLQG…KQPW). 2 stretches are compositionally biased toward polar residues: residues 212–230 (NRPQ…SSSP) and 261–275 (SWTT…PSSP). Residues 290-322 (PDLPPGWKRVSDIAGTYYWHIPTGTTQWERPVS) form the WW domain. Residues 331 to 340 (RKGSLSSVTP) show a composition bias toward polar residues. Phosphoserine is present on residues S334, S409, and S412. PID domains are found at residues 413–578 (DPEA…LQVD) and 584–736 (TELV…VTTN).

As to quaternary structure, interacts (via C-terminus) with APP (via C-terminus). Interacts with APLP2 (via cytoplasmic domain). As to expression, widely expressed.

The protein localises to the endoplasmic reticulum. The protein resides in the golgi apparatus. Its subcellular location is the early endosome. Plays a role in the maintenance of lens transparency, and may also play a role in muscle cell strength. Involved in hippocampal neurite branching and neuromuscular junction formation, as a result plays a role in spatial memory functioning. Activates transcription of APP. The chain is Amyloid beta precursor protein binding family B member 2 from Homo sapiens (Human).